Here is a 137-residue protein sequence, read N- to C-terminus: Basic phospholipase A2 PeBP(R)-I/II (137 aa).

Positions 1–16 (MRTLWIMAVLLLGVEG) are cleaved as a signal peptide. 7 disulfide bridges follow: Cys42/Cys131, Cys44/Cys60, Cys59/Cys111, Cys65/Cys137, Cys66/Cys104, Cys73/Cys97, and Cys91/Cys102. Residue His63 is part of the active site. The active site involves Asp105.

The protein belongs to the phospholipase A2 family. Group II subfamily. R49 sub-subfamily. Expressed by the venom gland.

It is found in the secreted. The catalysed reaction is a 1,2-diacyl-sn-glycero-3-phosphocholine + H2O = a 1-acyl-sn-glycero-3-phosphocholine + a fatty acid + H(+). In terms of biological role, snake venom phospholipases A2 that have myotoxic, and edema-inducing activity, as well as extremely weak lipolytic activity. PLA2 catalyzes the calcium-dependent hydrolysis of the 2-acyl groups in 3-sn-phosphoglycerides. The protein is Basic phospholipase A2 PeBP(R)-I/II of Protobothrops elegans (Elegant pitviper).